The primary structure comprises 65 residues: Large ribosomal subunit protein bL35 (65 aa).

The protein belongs to the bacterial ribosomal protein bL35 family.

The protein is Large ribosomal subunit protein bL35 of Alkalilimnicola ehrlichii (strain ATCC BAA-1101 / DSM 17681 / MLHE-1).